We begin with the raw amino-acid sequence, 677 residues long: Glutamine--fructose-6-phosphate aminotransferase [isomerizing] 1 (677 aa).

Cys-2 functions as the Nucleophile in the catalytic mechanism. The 268-residue stretch at Cys-2–Gly-269 folds into the Glutamine amidotransferase type-2 domain. SIS domains follow at residues His-353–Ser-492 and Leu-524–Pro-667. Substrate is bound by residues Thr-370–Ser-371, Ser-415–Ser-417, Thr-420, and His-571.

As to quaternary structure, homotetramer, may also exist as homodimers. Highly expressed in flowers specifically in mature anthers, mature pollen grains and pollen tubes. Barely observed in roots, leaves and stems.

The catalysed reaction is D-fructose 6-phosphate + L-glutamine = D-glucosamine 6-phosphate + L-glutamate. Its pathway is nucleotide-sugar biosynthesis; UDP-N-acetyl-alpha-D-glucosamine biosynthesis; alpha-D-glucosamine 6-phosphate from D-fructose 6-phosphate: step 1/1. In terms of biological role, controls the flux of glucose into the hexosamine biosynthetic pathway (HBP) leading to glucosamine (GlcN) content homeostasis. Involved in regulating the availability of precursors for N- and O-linked glycosylation of proteins. Required during pollen maturation and pollen tube formation by triggering polar deposition of pectin and callose in the pollen cell wall. Promotes tolerance to tunicamycin (Tm), an inhibitor of proteins N-glycosylation in endoplasmic reticulum (ER). The chain is Glutamine--fructose-6-phosphate aminotransferase [isomerizing] 1 from Arabidopsis thaliana (Mouse-ear cress).